A 615-amino-acid polypeptide reads, in one-letter code: ABC transporter G family member 22 (615 aa).

The ABC transporter domain occupies 31–279 (ITFKDLAYSV…EIGFPFPDQT (249 aa)). An ATP-binding site is contributed by 67 to 74 (GPSGSGKT). In terms of domain architecture, ABC transmembrane type-2 spans 364–610 (SNCLVRFAVA…TMVFLCLHYF (247 aa)). 6 helical membrane-spanning segments follow: residues 370–390 (FAVAVFVGLLFGACFSGLGMD), 400–420 (VLFYLVINMILQPFASISLFI), 442–462 (LALMFFEILACIGTAFILGTI), 477–497 (FFAMAILTLAHLAGDFFMLII), 508–528 (FAVGAGVATIYQLFAGFFVPI), and 587–607 (INLIIVSSFAFAFFTMVFLCL).

This sequence belongs to the ABC transporter superfamily. ABCG family. Eye pigment precursor importer (TC 3.A.1.204) subfamily.

The protein localises to the membrane. Functionally, may be involved in cell migration. This is ABC transporter G family member 22 (abcG22) from Dictyostelium discoideum (Social amoeba).